Consider the following 99-residue polypeptide: Protein Frey (99 aa).

A helical membrane pass occupies residues 10–29 (YPRAGLSLFLFYLILAGALL). Residues 60–90 (DYGLRPKHPRPGGPRPLLSQAQQRKRDGPNM) are disordered.

In terms of assembly, interacts with SPPL2C (via active sites); the interaction stabilizes FREY1 protein and inhibits SPPL2C proteolytic activity. Interacts with IZUMO1; the interaction retains IZUMO1 at the endoplasmic reticulum membrane and coordinates IZUMO1 complex assembly. As to expression, expressed in round spermatids (at protein level).

It is found in the endoplasmic reticulum membrane. Functionally, key regulator for male fertility expressed transiently in round spermatids where it recruits IZUMO1 at the endoplasmic reticulum (ER) membrane and coordinates the oolemmal binding multimeric complex (IZUMO1 complex) assembly. Upon complete assembly of the IZUMO1 complex, its ER retention is released, facilitating IZUMO1 complex export to the acrosome. Through the interaction with SPPL2C, inhibits its intramembrane protease activity directly accessing the catalytic center of an I-CLiP. In Mus musculus (Mouse), this protein is Protein Frey.